A 156-amino-acid polypeptide reads, in one-letter code: Transcription elongation factor GreA (156 aa).

The stretch at 1–84 (MAKYTISKHR…IEDVLRSTDE (84 aa)) forms a coiled coil.

Belongs to the GreA/GreB family.

In terms of biological role, necessary for efficient RNA polymerase transcription elongation past template-encoded arresting sites. The arresting sites in DNA have the property of trapping a certain fraction of elongating RNA polymerases that pass through, resulting in locked ternary complexes. Cleavage of the nascent transcript by cleavage factors such as GreA or GreB allows the resumption of elongation from the new 3'terminus. GreA releases sequences of 2 to 3 nucleotides. This Ureaplasma parvum serovar 3 (strain ATCC 27815 / 27 / NCTC 11736) protein is Transcription elongation factor GreA.